The following is a 492-amino-acid chain: GTPase Der (492 aa).

EngA-type G domains lie at 3–167 and 207–382; these read FTLA…EKFE and LQVA…DVWN. GTP-binding positions include 9–16, 56–60, 119–122, 213–220, 260–264, and 325–328; these read GRPNVGKS, DSAGL, NKSE, GRPNAGKS, DTAGM, and NKWD. Residues 383–469 enclose the KH-like domain; sequence RRVPTAALNR…RLTLRGQGDK (87 aa). Residues 461-492 are disordered; sequence LTLRGQGDKNPYKGKKKSTPSRLRKHLEGRKS. A compositionally biased stretch (basic residues) spans 472–492; that stretch reads YKGKKKSTPSRLRKHLEGRKS.

Belongs to the TRAFAC class TrmE-Era-EngA-EngB-Septin-like GTPase superfamily. EngA (Der) GTPase family. In terms of assembly, associates with the 50S ribosomal subunit.

GTPase that plays an essential role in the late steps of ribosome biogenesis. In Ruegeria sp. (strain TM1040) (Silicibacter sp.), this protein is GTPase Der.